The sequence spans 806 residues: MAAGKFASYHRNVQMNHPLVSSMDLLGSKSALGERRSDAFKNVCIHGTLPRKKKERVPIRSSDMFCHMGTLPHTKSHRLPNPLMQDIKEDYPFQERRTGIFNMREHYLDPAMEYVKFSKDRYIMDGGTPDKLKKELEEELKLNSEDLRSHAWYHGRIPRQVSESLVKRDGDFLIRDSLSSPGNLVLTCQWKNLSQHFKINKVVIRLNEAYCRIQYQLEHESFDSIPALVRFYVGNRKAVSQQSGAIIFQPINRTVPLRCIEEKYGTSPVRRLELGIMEVKSEPTKRLSLNFGQGISQEQSLVRGNLLRNKEKSGSQPACLDNMREKRRPLKAHQSESYLPLGSRQPCLSQGMDMKTSPKPHVFRTGSEPTLSPTEIRRFNHEVHPVEALRGSDSQLCPRPPPKPTKAPSIKQSQSPLVWQSSEANYCEFHPTPPEDCAWSDSHSSHNSYIEDQRTDEIETLSFSNSELSFPALDDSISQCSATDFCGNVEDDEFIRPVYETVSSFCPNDFQSVLLTAENKPLETSLLRRAKELFTNNDPRTIAKHILRMDCKVARILDVTPEVERMMGVSSGLELIILPYGHQLRLDLMERHSTMAIGIAVDILGCTGNLEERVATLHKIIQLAVEVKTLGDYFAFSAIMKALDMPQITRLEQTWTMLRHQYTQTAITYEKQLKPFSKYLHEGEALDAQEDVTVPLVMPLVTLLERQSVLFEGMDFWENNDRGCEILFNHLQTARQVAHNATVYKKNAQRILEGFKPDELMSEIFKTEFQMRLLWGSKGALLKQSERYHKFGQILTALSRKLEPPS.

Residues Trp-152–Ile-251 form the SH2 domain. Disordered regions lie at residues Arg-308–Ser-343 and Arg-390–Gln-412. Positions Asp-538–Pro-805 constitute a Ras-GEF domain.

Functionally, may act as an adapter protein. The polypeptide is Breast cancer anti-estrogen resistance protein 3 homolog (bcar3) (Xenopus laevis (African clawed frog)).